Reading from the N-terminus, the 398-residue chain is Phospholipase C (398 aa).

The first 28 residues, 1 to 28 (MKRKICKALICAALATSLWAGASTKVYA), serve as a signal peptide directing secretion. W29, H39, D84, H96, H154, D158, H164, H176, and E180 together coordinate Zn(2+). The region spanning 29–278 (WDGKIDGTGT…HDVSEGNDPS (250 aa)) is the Zn-dependent PLC domain. Positions 275 to 283 (NDPSVGKNV) are linker. One can recognise a PLAT domain in the interval 284–398 (KELVAYISTS…ISGNSTYNIK (115 aa)). Residues D297, G299, T300, D301, D321, N322, G324, N325, D326, D364, and A365 each contribute to the Ca(2+) site.

Belongs to the bacterial zinc-metallophospholipase C family. The cofactor is Ca(2+). Requires Zn(2+) as cofactor.

The protein resides in the secreted. It catalyses the reaction a 1,2-diacyl-sn-glycero-3-phosphocholine + H2O = phosphocholine + a 1,2-diacyl-sn-glycerol + H(+). Bacterial hemolysins are exotoxins that attack blood cell membranes and cause cell rupture. Constitutes an essential virulence factor in gas gangrene. Binds to eukaryotic membranes where it hydrolyzes both phosphatidylcholine and sphingomyelin. The diacylglycerol produced can activate both the arachidonic acid pathway, leading to modulation of the inflammatory response cascade and thrombosis, and protein kinase C, leading to activation of eukaryotic phospholipases and further membrane damage. Acts on human and mouse erythrocytes, but not on rabbit or horse erythrocytes. The chain is Phospholipase C (plc) from Clostridium perfringens (strain ATCC 13124 / DSM 756 / JCM 1290 / NCIMB 6125 / NCTC 8237 / Type A).